Consider the following 408-residue polypeptide: Histidine--tRNA ligase (408 aa).

The protein belongs to the class-II aminoacyl-tRNA synthetase family. In terms of assembly, homodimer.

It localises to the cytoplasm. It carries out the reaction tRNA(His) + L-histidine + ATP = L-histidyl-tRNA(His) + AMP + diphosphate + H(+). The sequence is that of Histidine--tRNA ligase from Campylobacter jejuni subsp. jejuni serotype O:6 (strain 81116 / NCTC 11828).